We begin with the raw amino-acid sequence, 772 residues long: Carnitine O-palmitoyltransferase 1, muscle isoform (772 aa).

The Cytoplasmic segment spans residues 1–47; the sequence is MAEAHQAVAFQFTVTPEGVDFRLSREALKHIYLSGINSWKKRLIRIK. The helical transmembrane segment at 48-73 threads the bilayer; sequence NGILRGVYPGSPTSWLVVASATAGSS. Topologically, residues 74–102 are mitochondrial intermembrane; it reads YYNVDISMGLVNHIQRCLPERYGPYWTPQ. Residues 103–122 form a helical membrane-spanning segment; that stretch reads TRALLSMAVVSTGVWMIGIF. The Cytoplasmic portion of the chain corresponds to 123–772; the sequence is FFRQTLKLLL…DLFQVPKTDS (650 aa). His-473 serves as the catalytic Proton acceptor. 555-567 lines the CoA pocket; the sequence is GKGLIKKCRTSPD. 2 residues coordinate (R)-carnitine: Tyr-589 and Thr-602.

It belongs to the carnitine/choline acetyltransferase family.

The protein resides in the mitochondrion outer membrane. The enzyme catalyses (R)-carnitine + hexadecanoyl-CoA = O-hexadecanoyl-(R)-carnitine + CoA. Its pathway is lipid metabolism; fatty acid beta-oxidation. Functionally, catalyzes the transfer of the acyl group of long-chain fatty acid-CoA conjugates onto carnitine, an essential step for the mitochondrial uptake of long-chain fatty acids and their subsequent beta-oxidation in the mitochondrion. In Sus scrofa (Pig), this protein is Carnitine O-palmitoyltransferase 1, muscle isoform (CPT1B).